A 502-amino-acid chain; its full sequence is Protein nucleotidyltransferase YdiU (502 aa).

8 residues coordinate ATP: Gly98, Gly100, Arg101, Lys121, Asp133, Gly134, Arg184, and Arg191. Catalysis depends on Asp260, which acts as the Proton acceptor. Positions 261 and 270 each coordinate Mg(2+). An ATP-binding site is contributed by Asp270.

Belongs to the SELO family. Mg(2+) serves as cofactor. The cofactor is Mn(2+).

The enzyme catalyses L-seryl-[protein] + ATP = 3-O-(5'-adenylyl)-L-seryl-[protein] + diphosphate. It carries out the reaction L-threonyl-[protein] + ATP = 3-O-(5'-adenylyl)-L-threonyl-[protein] + diphosphate. It catalyses the reaction L-tyrosyl-[protein] + ATP = O-(5'-adenylyl)-L-tyrosyl-[protein] + diphosphate. The catalysed reaction is L-histidyl-[protein] + UTP = N(tele)-(5'-uridylyl)-L-histidyl-[protein] + diphosphate. The enzyme catalyses L-seryl-[protein] + UTP = O-(5'-uridylyl)-L-seryl-[protein] + diphosphate. It carries out the reaction L-tyrosyl-[protein] + UTP = O-(5'-uridylyl)-L-tyrosyl-[protein] + diphosphate. Nucleotidyltransferase involved in the post-translational modification of proteins. It can catalyze the addition of adenosine monophosphate (AMP) or uridine monophosphate (UMP) to a protein, resulting in modifications known as AMPylation and UMPylation. This Rhizobium rhizogenes (strain K84 / ATCC BAA-868) (Agrobacterium radiobacter) protein is Protein nucleotidyltransferase YdiU.